A 69-amino-acid chain; its full sequence is Alpha-conotoxin SrIA/SrIB (69 aa).

The N-terminal stretch at 1-21 (MGMRMMFTVFLLVVLATTVVS) is a signal peptide. Positions 22-48 (FTSDSAFDSRNVAANDKVSDMIALTAR) are excised as a propeptide. 2 disulfides stabilise this stretch: cysteine 51-cysteine 57 and cysteine 52-cysteine 65. The interval 53-55 (SRP) is ser-Xaa-Pro motif, crucial for potent interaction with nAChR. Proline 55 bears the 4-hydroxyproline; in form Sr1A and Sr1B mark. Glutamate 60 is subject to 4-carboxyglutamate; in form Sr1A. Glutamate 63 bears the 4-carboxyglutamate; in form Sr1A and Sr1B mark. Glycine 66 carries the post-translational modification Glycine amide; in form Sr1A and Sr1B.

Belongs to the conotoxin A superfamily. In terms of processing, occurs in 2 forms which differ in the post-translational modification of Glu-60. In form SrA1 Glu-60 is 4-carboxyglutamate while in form SrA2 Glu-60 is unmodified. Expressed by the venom duct.

Its subcellular location is the secreted. Its function is as follows. Alpha-conotoxins act on postsynaptic membranes, they bind to the nicotinic acetylcholine receptors (nAChR) and thus inhibit them. Has weak blocking effects on muscle nAChR composed of alpha-1/beta-1/gamma/delta subunits and the central nervous system nAChR composed of alpha-4/beta-2 subunits. Does not detectably affect the peripheral nervous system nAChR composed of alpha-3/beta-4 subunits. Low toxin concentrations potentiate currents in muscle nAChR composed of alpha-1/beta-1/gamma/delta subunits and central nervous system nAChR composed of alpha-4/beta-2 subunits, but not the peripheral nervous system nAChR composed of alpha-3/beta-4 subunits. This is Alpha-conotoxin SrIA/SrIB from Conus spurius (Alphabet cone).